A 312-amino-acid chain; its full sequence is Beta-ketoacyl-[acyl-carrier-protein] synthase III 1 (312 aa).

Active-site residues include cysteine 113 and histidine 237. Residues 238 to 242 are ACP-binding; it reads QANIR. The active site involves asparagine 267.

It belongs to the thiolase-like superfamily. FabH family. In terms of assembly, homodimer.

It localises to the cytoplasm. The catalysed reaction is malonyl-[ACP] + acetyl-CoA + H(+) = 3-oxobutanoyl-[ACP] + CO2 + CoA. It functions in the pathway lipid metabolism; fatty acid biosynthesis. Its function is as follows. Catalyzes the condensation reaction of fatty acid synthesis by the addition to an acyl acceptor of two carbons from malonyl-ACP. Catalyzes the first condensation reaction which initiates fatty acid synthesis and may therefore play a role in governing the total rate of fatty acid production. Possesses both acetoacetyl-ACP synthase and acetyl transacylase activities. Its substrate specificity determines the biosynthesis of branched-chain and/or straight-chain of fatty acids. This chain is Beta-ketoacyl-[acyl-carrier-protein] synthase III 1, found in Halalkalibacterium halodurans (strain ATCC BAA-125 / DSM 18197 / FERM 7344 / JCM 9153 / C-125) (Bacillus halodurans).